The chain runs to 38 residues: Photosystem II reaction center protein X 2 (38 aa).

A helical transmembrane segment spans residues 8 to 28 (FLWSLVYGAVVLGLLFGAIVF).

This sequence belongs to the PsbX family. Type 1 subfamily. As to quaternary structure, PSII is composed of 1 copy each of membrane proteins PsbA, PsbB, PsbC, PsbD, PsbE, PsbF, PsbH, PsbI, PsbJ, PsbK, PsbL, PsbM, PsbT, PsbX, PsbY, PsbZ, Psb30/Ycf12, peripheral proteins PsbO, CyanoQ (PsbQ), PsbU, PsbV and a large number of cofactors. It forms dimeric complexes.

The protein localises to the cellular thylakoid membrane. Involved in the binding and/or turnover of quinones at the Q(B) site of photosystem II (PSII). PSII is a light-driven water plastoquinone oxidoreductase, using light energy to abstract electrons from H(2)O, generating a proton gradient subsequently used for ATP formation. The sequence is that of Photosystem II reaction center protein X 2 from Synechococcus sp. (strain JA-3-3Ab) (Cyanobacteria bacterium Yellowstone A-Prime).